The sequence spans 291 residues: 4,5:9,10-diseco-3-hydroxy-5,9,17-trioxoandrosta-1(10),2-diene-4-oate hydrolase (291 aa).

Residues 45–46 (GG), Asn-54, Asn-113, Leu-115, and Arg-192 contribute to the substrate site. His-269 (proton acceptor) is an active-site residue. Residue Trp-270 participates in substrate binding.

The protein belongs to the AB hydrolase superfamily. HsaD family. In terms of assembly, homodimer.

The enzyme catalyses (1E,2Z)-3-hydroxy-5,9,17-trioxo-4,5:9,10-disecoandrosta-1(10),2-dien-4-oate + H2O = 3-[(3aS,4S,7aS)-7a-methyl-1,5-dioxo-octahydro-1H-inden-4-yl]propanoate + (2Z,4Z)-2-hydroxyhexa-2,4-dienoate + H(+). The catalysed reaction is 2,6-dioxo-6-phenylhexa-3-enoate + H2O = 2-oxopent-4-enoate + benzoate + H(+). The protein operates within lipid metabolism; steroid biosynthesis. Functionally, catalyzes the hydrolysis of a carbon-carbon bond in 4,5: 9,10-diseco-3-hydroxy-5,9,17-trioxoandrosta-1(10),2-diene-4-oate (4,9-DSHA) to yield 9,17-dioxo-1,2,3,4,10,19-hexanorandrostan-5-oate (DOHNAA) and 2-hydroxy-hexa-2,4-dienoate (HHD). Is also able to catalyze the hydrolysis of 2-hydroxy-6-oxo-6-phenylhexa-2,4-dienoic acid (HOPDA) and the synthetic analog 8-(2-chlorophenyl)-2-hydroxy-5-methyl-6-oxoocta-2,4-dienoic acid (HOPODA). The sequence is that of 4,5:9,10-diseco-3-hydroxy-5,9,17-trioxoandrosta-1(10),2-diene-4-oate hydrolase (hsaD) from Mycobacterium tuberculosis (strain ATCC 25618 / H37Rv).